The sequence spans 366 residues: Tyrosyl-DNA phosphodiesterase 2 (366 aa).

Met1 bears the N-acetylmethionine mark. Low complexity predominate over residues 1–22 (MASGSSSDAAESAEPAAAPAAA). Positions 1-30 (MASGSSSDAAESAEPAAAPAAAETEEDQVK) are disordered. Lys30 participates in a covalent cross-link: Glycyl lysine isopeptide (Lys-Gly) (interchain with G-Cter in SUMO2). Thr95 bears the Phosphothreonine; by ACVR1B mark. Residues 126–130 (NIDGL) are interaction with 5' end of substrate DNA. The Mg(2+) site is built by Asp128 and Glu158. The interval 232–237 (HLESTR) is interaction with 5' end of substrate DNA. The active-site Proton donor/acceptor is the Asp268. The interaction with 5' end of substrate DNA stretch occupies residues 270–272 (NLR).

The protein belongs to the CCR4/nocturin family. In terms of assembly, interacts with TRAF2, TRAF3, TRAF5, TRAF6, TNFRSF8/CD30, TNFRSF5/CD40, TNFRSF1B/TNF-R75, ETS1, ETS2, FLI1, SMAD3 and ACVR1B/ALK4. It depends on Mg(2+) as a cofactor. Mn(2+) serves as cofactor. Post-translationally, ubiquitinated by TRAF6.

It localises to the nucleus. Its subcellular location is the PML body. The protein resides in the nucleolus. It is found in the cytoplasm. In terms of biological role, DNA repair enzyme that can remove a variety of covalent adducts from DNA through hydrolysis of a 5'-phosphodiester bond, giving rise to DNA with a free 5' phosphate. Catalyzes the hydrolysis of dead-end complexes between DNA and the topoisomerase 2 (TOP2) active site tyrosine residue. The 5'-tyrosyl DNA phosphodiesterase activity can enable the repair of TOP2-induced DNA double-strand breaks/DSBs without the need for nuclease activity, creating a 'clean' DSB with 5'-phosphate termini that are ready for ligation. Thereby, protects the transcription of many genes involved in neurological development and maintenance from the abortive activity of TOP2. Hydrolyzes 5'-phosphoglycolates on protruding 5' ends on DSBs due to DNA damage by radiation and free radicals. Has preference for single-stranded DNA or duplex DNA with a 4 base pair overhang as substrate. Also has 3'-tyrosyl DNA phosphodiesterase activity, but less efficiently and much slower than TDP1. Constitutes the major if not only 5'-tyrosyl-DNA phosphodiesterase in cells. Also acts as an adapter by participating in the specific activation of MAP3K7/TAK1 in response to TGF-beta: associates with components of the TGF-beta receptor-TRAF6-TAK1 signaling module and promotes their ubiquitination dependent complex formation. Involved in non-canonical TGF-beta induced signaling routes. May also act as a negative regulator of ETS1 and may inhibit NF-kappa-B activation. Acts as a regulator of ribosome biogenesis following stress. In Rattus norvegicus (Rat), this protein is Tyrosyl-DNA phosphodiesterase 2 (Tdp2).